Reading from the N-terminus, the 130-residue chain is Lipoprotein LpqS (130 aa).

The N-terminal stretch at 1–23 (MVWMRSAIVAVALGVTVAAVAAA) is a signal peptide. Cysteine 24 carries the N-palmitoyl cysteine lipid modification. Cysteine 24 carries the S-diacylglycerol cysteine lipid modification.

It localises to the cell membrane. May play an essential role in M.tuberculosis replication and survival inside the host cell. The sequence is that of Lipoprotein LpqS from Mycobacterium tuberculosis (strain ATCC 25618 / H37Rv).